The following is a 378-amino-acid chain: Succinate--CoA ligase [GDP-forming] subunit beta (378 aa).

Positions 9 to 235 constitute an ATP-grasp domain; sequence KEILARYGVP…VEAEHPLEVE (227 aa). GTP-binding positions include Lys-45, 52 to 54, Val-94, and Glu-99; that span reads GRG. Residues Asn-190 and Asp-204 each contribute to the Mg(2+) site. Residues Asn-255 and 312–314 contribute to the substrate site; that span reads GIT.

This sequence belongs to the succinate/malate CoA ligase beta subunit family. In terms of assembly, heterotetramer of two alpha and two beta subunits. Mg(2+) serves as cofactor.

The catalysed reaction is GTP + succinate + CoA = succinyl-CoA + GDP + phosphate. The enzyme catalyses succinate + ATP + CoA = succinyl-CoA + ADP + phosphate. Its pathway is carbohydrate metabolism; tricarboxylic acid cycle; succinate from succinyl-CoA (ligase route): step 1/1. Its function is as follows. Succinyl-CoA synthetase functions in the citric acid cycle (TCA), coupling the hydrolysis of succinyl-CoA to the synthesis of either ATP or GTP and thus represents the only step of substrate-level phosphorylation in the TCA. The beta subunit provides nucleotide specificity of the enzyme and binds the substrate succinate, while the binding sites for coenzyme A and phosphate are found in the alpha subunit. Can use either ATP or GTP, but prefers GTP. This chain is Succinate--CoA ligase [GDP-forming] subunit beta, found in Thermus thermophilus.